Consider the following 318-residue polypeptide: Annexin D6 (318 aa).

An N-acetylalanine modification is found at Ala2. Annexin repeat units lie at residues Pro11–Leu82, Asp83–Ser154, Lys168–Lys239, and Tyr243–Gly314. The Ca(2+) site is built by Phe24, Gly26, Gly28, and Glu68. The residue at position 95 (Ser95) is a Phosphoserine. Thr100 and Thr112 each carry phosphothreonine. Position 129 is a phosphotyrosine (Tyr129). The Ca(2+) site is built by Ile256, Arg258, and Gly260. A Phosphotyrosine modification is found at Tyr285. Phosphoserine is present on Ser290. Positions 300 and 301 each coordinate Ca(2+).

It belongs to the annexin (TC 1.A.31.1) family. In terms of tissue distribution, expressed in flowers.

The polypeptide is Annexin D6 (ANN6) (Arabidopsis thaliana (Mouse-ear cress)).